Reading from the N-terminus, the 152-residue chain is Large-conductance mechanosensitive channel (152 aa).

The next 3 membrane-spanning stretches (helical) occupy residues 14–34 (VVDMAVGIILGVAFGAIVKSL), 39–59 (LMPGIGILLGSADFSNLFLVI), and 85–105 (GLFINTIVNFIIVAFALFLVI).

The protein belongs to the MscL family. In terms of assembly, homopentamer.

The protein resides in the cell inner membrane. Channel that opens in response to stretch forces in the membrane lipid bilayer. May participate in the regulation of osmotic pressure changes within the cell. The polypeptide is Large-conductance mechanosensitive channel (Syntrophus aciditrophicus (strain SB)).